We begin with the raw amino-acid sequence, 190 residues long: Potassium-transporting ATPase KdpC subunit (190 aa).

The chain crosses the membrane as a helical span at residues 10-30 (TFLFLLLITGGVYPLLTTALG).

It belongs to the KdpC family. The system is composed of three essential subunits: KdpA, KdpB and KdpC.

It is found in the cell inner membrane. Functionally, part of the high-affinity ATP-driven potassium transport (or Kdp) system, which catalyzes the hydrolysis of ATP coupled with the electrogenic transport of potassium into the cytoplasm. This subunit acts as a catalytic chaperone that increases the ATP-binding affinity of the ATP-hydrolyzing subunit KdpB by the formation of a transient KdpB/KdpC/ATP ternary complex. This chain is Potassium-transporting ATPase KdpC subunit, found in Escherichia coli O81 (strain ED1a).